The sequence spans 354 residues: Uroporphyrinogen decarboxylase (354 aa).

Substrate contacts are provided by residues 27–31 (RQAGR), aspartate 77, tyrosine 154, serine 209, and histidine 327.

The protein belongs to the uroporphyrinogen decarboxylase family. As to quaternary structure, homodimer.

The protein localises to the cytoplasm. It catalyses the reaction uroporphyrinogen III + 4 H(+) = coproporphyrinogen III + 4 CO2. Its pathway is porphyrin-containing compound metabolism; protoporphyrin-IX biosynthesis; coproporphyrinogen-III from 5-aminolevulinate: step 4/4. In terms of biological role, catalyzes the decarboxylation of four acetate groups of uroporphyrinogen-III to yield coproporphyrinogen-III. The chain is Uroporphyrinogen decarboxylase from Shewanella pealeana (strain ATCC 700345 / ANG-SQ1).